The following is a 425-amino-acid chain: Terminal nucleotidyltransferase 5B (425 aa).

Residues 1 to 42 (MMPSESGAERRDRAAAQVGTAAATAVATAAPAGGGPDPEALS) are disordered. Over residues 15–31 (AAQVGTAAATAVATAAP) the composition is skewed to low complexity.

It belongs to the TENT family.

The protein localises to the cytoplasm. It localises to the nucleus. The enzyme catalyses RNA(n) + ATP = RNA(n)-3'-adenine ribonucleotide + diphosphate. In terms of biological role, catalyzes the transfer of one adenosine molecule from an ATP to an mRNA poly(A) tail bearing a 3'-OH terminal group in an ATP hydrolysis-dependent manner. May be involved in maintaining the translation efficiency of at least some genes through preventing degradation of their mRNAs. Prefers RNA molecules that are adenosine-rich close to 3'-end. In addition, may inhibit cell proliferation and cell cycle progression through ubiquitination of beta-catenin/CTNNB1. In Homo sapiens (Human), this protein is Terminal nucleotidyltransferase 5B.